The chain runs to 209 residues: Putative thymidylate synthase (209 aa).

The active site involves Cys137.

It belongs to the thymidylate synthase family. Archaeal-type ThyA subfamily. Monomer.

It localises to the cytoplasm. The protein operates within pyrimidine metabolism; dTTP biosynthesis. In terms of biological role, may catalyze the biosynthesis of dTMP using an unknown cosubstrate. The polypeptide is Putative thymidylate synthase (Methanopyrus kandleri (strain AV19 / DSM 6324 / JCM 9639 / NBRC 100938)).